The following is a 429-amino-acid chain: UDP-N-acetylglucosamine 1-carboxyvinyltransferase (429 aa).

Residue Lys22–Asn23 coordinates phosphoenolpyruvate. Residue Arg102 participates in UDP-N-acetyl-alpha-D-glucosamine binding. The active-site Proton donor is Cys126. Cys126 is modified (2-(S-cysteinyl)pyruvic acid O-phosphothioketal). UDP-N-acetyl-alpha-D-glucosamine is bound by residues Arg131–Leu135, Lys171–Val174, Asp316, and Ile338.

Belongs to the EPSP synthase family. MurA subfamily.

The protein resides in the cytoplasm. It catalyses the reaction phosphoenolpyruvate + UDP-N-acetyl-alpha-D-glucosamine = UDP-N-acetyl-3-O-(1-carboxyvinyl)-alpha-D-glucosamine + phosphate. The protein operates within cell wall biogenesis; peptidoglycan biosynthesis. In terms of biological role, cell wall formation. Adds enolpyruvyl to UDP-N-acetylglucosamine. The polypeptide is UDP-N-acetylglucosamine 1-carboxyvinyltransferase (Brucella abortus (strain S19)).